We begin with the raw amino-acid sequence, 476 residues long: G-patch domain and KOW motifs-containing protein (476 aa).

Residues 1 to 96 (MADSKEGVLP…PGPSTDTGAL (96 aa)) are disordered. The residue at position 2 (alanine 2) is an N-acetylalanine. Lysine 5 participates in a covalent cross-link: Glycyl lysine isopeptide (Lys-Gly) (interchain with G-Cter in SUMO2). The span at 13-26 (AASTAPISFGFTRT) shows a compositional bias: polar residues. Serine 27 carries the post-translational modification Phosphoserine; by PKA. Phosphoserine is present on residues serine 35 and serine 42. Positions 43-58 (PEEKDFLKTVEGRELQ) are enriched in basic and acidic residues. At serine 115 the chain carries Phosphoserine. The region spanning 164–210 (VEAYGLAMLRGMGWKPGEGIGRTFNQVVKPRVNSLRPKGLGLGANLT) is the G-patch domain. A disordered region spans residues 203–244 (LGLGANLTEAQALTPTGPSRMPRPDEEQEKDKEDQPQGLVPG). Positions 210 to 219 (TEAQALTPTG) are enriched in polar residues. Position 216 is a phosphothreonine (threonine 216). Residues 224–237 (PRPDEEQEKDKEDQ) are compositionally biased toward basic and acidic residues. The KOW 1 domain occupies 240-267 (GLVPGGAVVVLSGPHRGLYGKVEGLDPD). Threonine 316 is subject to Phosphothreonine; by PKA. Positions 327–353 (DNSERKRKHLPDRQDGPAAKSEKAAPR) are disordered. Residues 337–351 (PDRQDGPAAKSEKAA) are compositionally biased toward basic and acidic residues. In terms of domain architecture, KOW 2 spans 415–442 (PKAEGDRVMVVLGPQTGRVGHLLSRDRA). A Phosphoserine modification is found at serine 471. The residue at position 473 (threonine 473) is a Phosphothreonine.

Belongs to the MOS2 family. In terms of assembly, component of the minor spliceosome, which splices U12-type introns. Interacts with PRKX. Interacts with DHX16. Interacts with PRKACB. Post-translationally, phosphorylation regulates its ability to bind RNA.

The protein localises to the nucleus. In terms of biological role, RNA-binding protein involved in pre-mRNA splicing. As a component of the minor spliceosome, involved in the splicing of U12-type introns in pre-mRNAs. This Homo sapiens (Human) protein is G-patch domain and KOW motifs-containing protein (GPKOW).